A 374-amino-acid chain; its full sequence is N-acetyldiaminopimelate deacetylase (374 aa).

D69 is an active-site residue. The Proton acceptor role is filled by E128.

The protein belongs to the peptidase M20A family. N-acetyldiaminopimelate deacetylase subfamily.

It catalyses the reaction N-acetyl-(2S,6S)-2,6-diaminopimelate + H2O = (2S,6S)-2,6-diaminopimelate + acetate. It functions in the pathway amino-acid biosynthesis; L-lysine biosynthesis via DAP pathway; LL-2,6-diaminopimelate from (S)-tetrahydrodipicolinate (acetylase route): step 3/3. Catalyzes the conversion of N-acetyl-diaminopimelate to diaminopimelate and acetate. The polypeptide is N-acetyldiaminopimelate deacetylase (Bacillus licheniformis (strain ATCC 14580 / DSM 13 / JCM 2505 / CCUG 7422 / NBRC 12200 / NCIMB 9375 / NCTC 10341 / NRRL NRS-1264 / Gibson 46)).